The sequence spans 828 residues: Transcription factor SOX-6 (828 aa).

The interval 1 to 51 (MSSKQATSPFACAADGEDAMTQDLTSREKEEGSDQHVASHLPLHPIMHNKP) is disordered. Over residues 25–34 (TSREKEEGSD) the composition is skewed to basic and acidic residues. The residue at position 119 (Thr119) is a Phosphothreonine. Residues 184 to 262 (LAEKERQLST…LLQQQIQVQG (79 aa)) are a coiled coil. The tract at residues 380–470 (SPGAKMPSTP…KSSIPSPIGG (91 aa)) is disordered. Positions 393–402 (NTAGTVSPTG) are enriched in polar residues. The residue at position 399 (Ser399) is a Phosphoserine. At Thr401 the chain carries Phosphothreonine. Residues Lys404 and Lys417 each participate in a glycyl lysine isopeptide (Lys-Gly) (interchain with G-Cter in SUMO) cross-link. Phosphoserine is present on residues Ser439 and Ser442. Residues 439-461 (SPTSPTQNLFPASKTSPVNLPNK) show a composition bias toward polar residues. The HMG box DNA-binding region spans 621–689 (IKRPMNAFMV…IHLEKYPNYK (69 aa)). Residues 753–781 (TPSPQMTSDCSSTSASPEPSLPVIQSTYG) are compositionally biased toward polar residues. The segment at 753-828 (TPSPQMTSDC…NEAPEAVSAN (76 aa)) is disordered. Residues 796–809 (NGEDEMEMYDDYED) are compositionally biased toward acidic residues.

As to quaternary structure, homodimer. Interacts with DAZAP2. May interact with CENPK. In terms of processing, sumoylation inhibits the transcriptional activity. As to expression, expressed in a wide variety of tissues, most abundantly in skeletal musclen.

Its subcellular location is the nucleus. The protein localises to the cytoplasm. Its function is as follows. Transcription factor that plays a key role in several developmental processes, including neurogenesis, chondrocytes differentiation and cartilage formation. Specifically binds the 5'-AACAAT-3' DNA motif present in enhancers and super-enhancers and promotes expression of genes important for chondrogenesis. Required for overt chondrogenesis when condensed prechondrocytes differentiate into early stage chondrocytes: SOX5 and SOX6 cooperatively bind with SOX9 on active enhancers and super-enhancers associated with cartilage-specific genes, and thereby potentiate SOX9's ability to transactivate. Not involved in precartilaginous condensation, the first step in chondrogenesis, during which skeletal progenitors differentiate into prechondrocytes. Together with SOX5, required to form and maintain a pool of highly proliferating chondroblasts between epiphyses and metaphyses, to form columnar chondroblasts, delay chondrocyte prehypertrophy but promote hypertrophy, and to delay terminal differentiation of chondrocytes on contact with ossification fronts. Binds to the proximal promoter region of the myelin protein MPZ gene, and is thereby involved in the differentiation of oligodendroglia in the developing spinal tube. Binds to the gene promoter of MBP and acts as a transcriptional repressor. This Homo sapiens (Human) protein is Transcription factor SOX-6.